We begin with the raw amino-acid sequence, 403 residues long: 4-hydroxy-3-methylbut-2-enyl diphosphate reductase (403 aa).

Cys66 provides a ligand contact to [4Fe-4S] cluster. Residue His96 coordinates (2E)-4-hydroxy-3-methylbut-2-enyl diphosphate. His96 is a dimethylallyl diphosphate binding site. His96 lines the isopentenyl diphosphate pocket. Position 157 (Cys157) interacts with [4Fe-4S] cluster. A (2E)-4-hydroxy-3-methylbut-2-enyl diphosphate-binding site is contributed by His185. His185 is a dimethylallyl diphosphate binding site. Residue His185 participates in isopentenyl diphosphate binding. Glu187 serves as the catalytic Proton donor. Thr250 contacts (2E)-4-hydroxy-3-methylbut-2-enyl diphosphate. [4Fe-4S] cluster is bound at residue Cys288. The (2E)-4-hydroxy-3-methylbut-2-enyl diphosphate site is built by Ser317, Ser318, Asn319, and Ser379. Dimethylallyl diphosphate is bound by residues Ser317, Ser318, Asn319, and Ser379. Isopentenyl diphosphate-binding residues include Ser317, Ser318, Asn319, and Ser379.

This sequence belongs to the IspH family. It depends on [4Fe-4S] cluster as a cofactor.

It catalyses the reaction isopentenyl diphosphate + 2 oxidized [2Fe-2S]-[ferredoxin] + H2O = (2E)-4-hydroxy-3-methylbut-2-enyl diphosphate + 2 reduced [2Fe-2S]-[ferredoxin] + 2 H(+). The enzyme catalyses dimethylallyl diphosphate + 2 oxidized [2Fe-2S]-[ferredoxin] + H2O = (2E)-4-hydroxy-3-methylbut-2-enyl diphosphate + 2 reduced [2Fe-2S]-[ferredoxin] + 2 H(+). It functions in the pathway isoprenoid biosynthesis; dimethylallyl diphosphate biosynthesis; dimethylallyl diphosphate from (2E)-4-hydroxy-3-methylbutenyl diphosphate: step 1/1. The protein operates within isoprenoid biosynthesis; isopentenyl diphosphate biosynthesis via DXP pathway; isopentenyl diphosphate from 1-deoxy-D-xylulose 5-phosphate: step 6/6. Catalyzes the conversion of 1-hydroxy-2-methyl-2-(E)-butenyl 4-diphosphate (HMBPP) into a mixture of isopentenyl diphosphate (IPP) and dimethylallyl diphosphate (DMAPP). Acts in the terminal step of the DOXP/MEP pathway for isoprenoid precursor biosynthesis. The protein is 4-hydroxy-3-methylbut-2-enyl diphosphate reductase of Picosynechococcus sp. (strain ATCC 27264 / PCC 7002 / PR-6) (Agmenellum quadruplicatum).